A 405-amino-acid chain; its full sequence is Potassium channel subfamily K member 18 (405 aa).

The chain crosses the membrane as a helical span at residues 43–63 (LPGLCFLCCLVTYALVGAALF). N-linked (GlcNAc...) asparagine glycosylation is present at Asn-94. The pore-forming intramembrane region spans 125-151 (FLSALFFCCTVFSTVGYGHMYPVTRLG). Positions 138, 139, 140, and 141 each coordinate K(+). Residues 138–143 (TVGYGH) form a selectivity filter 1 region. A helical membrane pass occupies residues 153–173 (FLCMLYALFGIPLMFLVLTDI). The segment at 221-226 (PQIVID) is interaction with calcineurin. The interval 272–277 (RSNSCP) is interaction with YWHAH. Phosphoserine occurs at positions 275 and 287. The chain crosses the membrane as a helical span at residues 304-324 (IPLPVIALVIFAYISCAAAIL). Positions 337-351 (FYFCFVTLTTIGFGD) form an intramembrane region, pore-forming. Residues 346–351 (TIGFGD) are selectivity filter 2. The helical transmembrane segment at 358–378 (HFFLFFSIYIIVGMEILFIAF) threads the bilayer.

The protein belongs to the two pore domain potassium channel (TC 1.A.1.8) family. As to quaternary structure, homodimer. Heterodimer with KCNK2. Heterodimer with KCNK10. Interacts with calcineurin. Interacts with YWHAH, in a phosphorylation-dependent manner. Phosphorylation of Ser-275 is required for the binding of 14-3-3eta/YWHAH. Calcineurin-mediated dephosphorylation of Ser-287 enhances channel activity. In terms of processing, N-glycosylated.

The protein localises to the cell membrane. It carries out the reaction K(+)(in) = K(+)(out). With respect to regulation, activated by volatile anesthetics, such as isoflurane and inhibited by local anesthetics such as bupivacaine and lidocaine. Inhibited by extracellular acidic pH. Inhibited by Zn(2+) ions. Functionally, k(+) channel that conducts outward and inward rectifying currents at depolarized and hyperpolarized membrane potentials, respectively. The outward rectifying currents are voltage-dependent, coupled to K(+) electrochemical gradient across the membrane, whereas the inward currents can be induced in response to activation of Ca(2+)-mobilizing receptors. Homo- and heterodimerizes to form functional channels with distinct regulatory and gating properties. In trigeminal ganglia sensory neurons, the heterodimers of KCNK18/TRESK and KCNK2/TREK-1 or KCNK10/TREK-2 inhibit neuronal firing and neurogenic inflammation by stabilizing the resting membrane potential at K(+) equilibrium potential as well as by regulating the threshold of action potentials and the spike frequency. In thymocytes, conducts K(+) currents upon T cell receptor (TCR) signaling leading to sustained Ca(2+) influx and NF-kappa-B activation, FOXP3 transcription and positive selection of regulatory T cell (Treg) progenitor subsets. Appears to mediate the analgesics effects of hydroxy-alpha-sanshool, a metabolite naturally present in Schezuan pepper and other Xanthoxylum plants. The sequence is that of Potassium channel subfamily K member 18 (Kcnk18) from Rattus norvegicus (Rat).